A 288-amino-acid chain; its full sequence is Bifunctional protein FolD (288 aa).

Residues 166–168 (GAS) and I232 each bind NADP(+).

Belongs to the tetrahydrofolate dehydrogenase/cyclohydrolase family. As to quaternary structure, homodimer.

It carries out the reaction (6R)-5,10-methylene-5,6,7,8-tetrahydrofolate + NADP(+) = (6R)-5,10-methenyltetrahydrofolate + NADPH. The catalysed reaction is (6R)-5,10-methenyltetrahydrofolate + H2O = (6R)-10-formyltetrahydrofolate + H(+). It functions in the pathway one-carbon metabolism; tetrahydrofolate interconversion. Its function is as follows. Catalyzes the oxidation of 5,10-methylenetetrahydrofolate to 5,10-methenyltetrahydrofolate and then the hydrolysis of 5,10-methenyltetrahydrofolate to 10-formyltetrahydrofolate. The polypeptide is Bifunctional protein FolD (Yersinia pseudotuberculosis serotype O:1b (strain IP 31758)).